Here is a 206-residue protein sequence, read N- to C-terminus: Pyridoxine/pyridoxamine 5'-phosphate oxidase (206 aa).

FMN is bound by residues 53 to 58, 68 to 69, Lys75, and Gln97; these read RMVLLK and YT. Substrate is bound at residue Lys58. Residues Tyr115, Arg119, and Ser123 each contribute to the substrate site. Residues 132-133 and Trp177 each bind FMN; that span reads QS. Residue 183 to 185 participates in substrate binding; it reads RLH. FMN is bound at residue Arg187.

It belongs to the pyridoxamine 5'-phosphate oxidase family. Homodimer. The cofactor is FMN.

The enzyme catalyses pyridoxamine 5'-phosphate + O2 + H2O = pyridoxal 5'-phosphate + H2O2 + NH4(+). The catalysed reaction is pyridoxine 5'-phosphate + O2 = pyridoxal 5'-phosphate + H2O2. The protein operates within cofactor metabolism; pyridoxal 5'-phosphate salvage; pyridoxal 5'-phosphate from pyridoxamine 5'-phosphate: step 1/1. Its pathway is cofactor metabolism; pyridoxal 5'-phosphate salvage; pyridoxal 5'-phosphate from pyridoxine 5'-phosphate: step 1/1. Its function is as follows. Catalyzes the oxidation of either pyridoxine 5'-phosphate (PNP) or pyridoxamine 5'-phosphate (PMP) into pyridoxal 5'-phosphate (PLP). This chain is Pyridoxine/pyridoxamine 5'-phosphate oxidase, found in Rhizobium etli (strain CIAT 652).